A 598-amino-acid chain; its full sequence is Elongation factor 4 (598 aa).

The region spanning 5-187 (SHIRNFSIIA…RLVATIPAPT (183 aa)) is the tr-type G domain. Residues 17-22 (DHGKST) and 134-137 (NKMD) contribute to the GTP site.

This sequence belongs to the TRAFAC class translation factor GTPase superfamily. Classic translation factor GTPase family. LepA subfamily.

The protein localises to the cell inner membrane. It carries out the reaction GTP + H2O = GDP + phosphate + H(+). Required for accurate and efficient protein synthesis under certain stress conditions. May act as a fidelity factor of the translation reaction, by catalyzing a one-codon backward translocation of tRNAs on improperly translocated ribosomes. Back-translocation proceeds from a post-translocation (POST) complex to a pre-translocation (PRE) complex, thus giving elongation factor G a second chance to translocate the tRNAs correctly. Binds to ribosomes in a GTP-dependent manner. The chain is Elongation factor 4 from Pseudomonas syringae pv. syringae (strain B728a).